The chain runs to 429 residues: Enolase (429 aa).

Q164 provides a ligand contact to (2R)-2-phosphoglycerate. E206 (proton donor) is an active-site residue. D243, E286, and D313 together coordinate Mg(2+). Residues K338, R367, S368, and K389 each contribute to the (2R)-2-phosphoglycerate site. The Proton acceptor role is filled by K338.

This sequence belongs to the enolase family. Mg(2+) serves as cofactor.

The protein localises to the cytoplasm. The protein resides in the secreted. Its subcellular location is the cell surface. It carries out the reaction (2R)-2-phosphoglycerate = phosphoenolpyruvate + H2O. The protein operates within carbohydrate degradation; glycolysis; pyruvate from D-glyceraldehyde 3-phosphate: step 4/5. Functionally, catalyzes the reversible conversion of 2-phosphoglycerate (2-PG) into phosphoenolpyruvate (PEP). It is essential for the degradation of carbohydrates via glycolysis. The chain is Enolase from Thermosipho africanus (strain TCF52B).